The chain runs to 157 residues: Phosphopantetheine adenylyltransferase (157 aa).

Residue threonine 8 participates in substrate binding. Residues threonine 8–phenylalanine 9 and histidine 16 each bind ATP. Lysine 40, threonine 72, and arginine 86 together coordinate substrate. Residues glycine 87 to arginine 89, glutamate 97, and tyrosine 122 to serine 128 contribute to the ATP site.

The protein belongs to the bacterial CoaD family. Homohexamer. The cofactor is Mg(2+).

The protein resides in the cytoplasm. It carries out the reaction (R)-4'-phosphopantetheine + ATP + H(+) = 3'-dephospho-CoA + diphosphate. It functions in the pathway cofactor biosynthesis; coenzyme A biosynthesis; CoA from (R)-pantothenate: step 4/5. Its function is as follows. Reversibly transfers an adenylyl group from ATP to 4'-phosphopantetheine, yielding dephospho-CoA (dPCoA) and pyrophosphate. The protein is Phosphopantetheine adenylyltransferase of Prochlorococcus marinus (strain MIT 9312).